Consider the following 144-residue polypeptide: Cell division protein SepF (144 aa).

Positions 14-31 (EDDEMNEVPYTESEEQQE) are enriched in acidic residues. A disordered region spans residues 14 to 41 (EDDEMNEVPYTESEEQQEEIPQTQKNER).

Belongs to the SepF family. In terms of assembly, homodimer. Interacts with FtsZ.

The protein resides in the cytoplasm. Its function is as follows. Cell division protein that is part of the divisome complex and is recruited early to the Z-ring. Probably stimulates Z-ring formation, perhaps through the cross-linking of FtsZ protofilaments. Its function overlaps with FtsA. This is Cell division protein SepF from Lactobacillus johnsonii (strain CNCM I-12250 / La1 / NCC 533).